A 488-amino-acid polypeptide reads, in one-letter code: MGDRGSSRRRRTGSRPSSHGGGGPAAAEEEVRDAAAGPDVGAAGDAPAPAPNKDGDAGVGSGHWELRCHRLQDSLFSSDSGFSNYRGILNWCVVMLILSNARLFLENLIKYGILVDPIQVVSLFLKDPYSWPAPCLVIAANVFAVAAFQVEKRLAVGALTEQAGLLLHVANLATILCFPAAVVLLVESITPVGSLLALMAHTILFLKLFSYRDVNSWCRRARAKAASAGKKASSAAAPHTVSYPDNLTYRDLYYFLFAPTLCYELNFPRSPRIRKRFLLRRILEMLFFTQLQVGLIQQWMVPTIQNSMKPFKDMDYSRIIERLLKLAVPNHLIWLIFFYWLFHSCLNAVAELMQFGDREFYRDWWNSESVTYFWQNWNIPVHKWCIRHFYKPMLRRGSSKWMARTGVFLASAFFHEYLVSVPLRMFRLWAFTGMMAQIPLAWFVGRFFQGNYGNAAVWLSLIIGQPIAVLMYVHDYYVLNYEAPAAEA.

The disordered stretch occupies residues 1–57 (MGDRGSSRRRRTGSRPSSHGGGGPAAAEEEVRDAAAGPDVGAAGDAPAPAPNKDGDA). Residues 1–83 (MGDRGSSRRR…SLFSSDSGFS (83 aa)) lie on the Cytoplasmic side of the membrane. The involved in homomerization stretch occupies residues 1 to 91 (MGDRGSSRRR…FSNYRGILNW (91 aa)). Phosphoserine is present on residues serine 17 and serine 18. Residues 34–47 (AAAGPDVGAAGDAP) are compositionally biased toward low complexity. The helical transmembrane segment at 84–118 (NYRGILNWCVVMLILSNARLFLENLIKYGILVDPI) threads the bilayer. The Lumenal segment spans residues 119 to 130 (QVVSLFLKDPYS). The tract at residues 119–130 (QVVSLFLKDPYS) is extracellular loop 1 (EL1). The chain crosses the membrane as a helical span at residues 131-156 (WPAPCLVIAANVFAVAAFQVEKRLAV). The interval 131–488 (WPAPCLVIAA…LNYEAPAAEA (358 aa)) is MBOAT fold. Residues 157-161 (GALTE) are Cytoplasmic-facing. The helical transmembrane segment at 162–184 (QAGLLLHVANLATILCFPAAVVL) threads the bilayer. Residues 185-191 (LVESITP) lie on the Lumenal side of the membrane. A helical membrane pass occupies residues 192 to 223 (VGSLLALMAHTILFLKLFSYRDVNSWCRRARA). Over 224 to 273 (KAASAGKKASSAAAPHTVSYPDNLTYRDLYYFLFAPTLCYELNFPRSPRI) the chain is Cytoplasmic. Positions 224–276 (KAASAGKKASSAAAPHTVSYPDNLTYRDLYYFLFAPTLCYELNFPRSPRIRKR) are intracellular loop 1 (IL1). Residues 274–308 (RKRFLLRRILEMLFFTQLQVGLIQQWMVPTIQNSM) traverse the membrane as a helical segment. Residues 309-315 (KPFKDMD) lie on the Lumenal side of the membrane. Residues 316 to 353 (YSRIIERLLKLAVPNHLIWLIFFYWLFHSCLNAVAELM) form a helical membrane-spanning segment. Residues 354–399 (QFGDREFYRDWWNSESVTYFWQNWNIPVHKWCIRHFYKPMLRRGSS) are Cytoplasmic-facing. Residues 354–399 (QFGDREFYRDWWNSESVTYFWQNWNIPVHKWCIRHFYKPMLRRGSS) form an intracellular loop 2 (IL2) region. The FYXDWWN motif motif lies at 360–366 (FYRDWWN). An acyl-CoA is bound by residues 374–382 (WQNWNIPVH), tyrosine 390, and arginine 404. The segment at 380–394 (PVHKWCIRHFYKPML) is amphipathic helix (AH). Residues 400–420 (KWMARTGVFLASAFFHEYLVS) form a helical membrane-spanning segment. Histidine 415 is a catalytic residue. At 421 to 428 (VPLRMFRL) the chain is on the lumenal side. Residues 429–447 (WAFTGMMAQIPLAWFVGRF) form a helical membrane-spanning segment. The Cytoplasmic portion of the chain corresponds to 448–449 (FQ). Residues 450–481 (GNYGNAAVWLSLIIGQPIAVLMYVHDYYVLNY) traverse the membrane as a helical segment. Residue tyrosine 477 participates in an acyl-CoA binding. Residues 482-488 (EAPAAEA) are Lumenal-facing.

Belongs to the membrane-bound acyltransferase family. Sterol o-acyltransferase subfamily. In terms of assembly, homodimer or homotetramer; both forms have similar enzymatic activities.

The protein resides in the endoplasmic reticulum membrane. It carries out the reaction an acyl-CoA + a 1,2-diacyl-sn-glycerol = a triacyl-sn-glycerol + CoA. The catalysed reaction is all-trans-retinol + an acyl-CoA = an all-trans-retinyl ester + CoA. The enzyme catalyses 2-(9Z-octadecenoyl)-glycerol + (9Z)-octadecenoyl-CoA = 1,2-di-(9Z-octadecenoyl)-sn-glycerol + CoA. It catalyses the reaction 1,2-di-(9Z-octadecenoyl)-sn-glycerol + (9Z)-octadecenoyl-CoA = 1,2,3-tri-(9Z-octadecenoyl)-glycerol + CoA. It carries out the reaction all-trans-retinol + hexadecanoyl-CoA = all-trans-retinyl hexadecanoate + CoA. The catalysed reaction is 1-O-(9Z-octadecenyl)-glycerol + (9Z)-octadecenoyl-CoA = 1-O-(9Z-octadecyl)-3-(9Z-octadecenoyl)-glycerol + CoA. The enzyme catalyses 1-O-(9Z-octadecyl)-3-(9Z-octadecenoyl)-glycerol + (9Z)-octadecenoyl-CoA = 1-O-(9Z-octadecenyl)-2,3-di-(9Z-octadecenoyl)glycerol + CoA. It catalyses the reaction 1-(9Z-octadecenoyl)-glycerol + (9Z)-octadecenoyl-CoA = 1,2-di-(9Z-octadecenoyl)-glycerol + CoA. It carries out the reaction 1,2-di-(9Z-octadecenoyl)-glycerol + (9Z)-octadecenoate + H(+) = 1,2,3-tri-(9Z-octadecenoyl)-glycerol + H2O. The catalysed reaction is 1-octadecanoyl-2-(5Z,8Z,11Z,14Z-eicosatetraenoyl)-sn-glycerol + (9Z)-octadecenoyl-CoA = 1-octadecanoyl-2-(5Z,8Z,11Z,14Z)-eicosatetraenoyl-3-(9Z)-octadecenoyl-sn-glycerol + CoA. The enzyme catalyses hexadecane-1,2-diol + 2 hexadecanoyl-CoA = 1,2-O,O-dihexadecanoyl-1,2-hexadecanediol + 2 CoA. It catalyses the reaction hexadecane-1,2-diol + hexadecanoyl-CoA = 2-hydroxyhexadecyl hexadecanoate + CoA. It carries out the reaction 2-(9Z-octadecenoyl)-glycerol + hexadecanoyl-CoA = 1-hexadecanoyl-2-(9Z-octadecenoyl)-sn-glycerol + CoA. The catalysed reaction is 1,2-di-(9Z-octadecenoyl)-sn-glycerol + hexadecanoyl-CoA = 1,2-di-(9Z)-octadecenoyl-3-hexadecanoyl-sn-glycerol + CoA. The enzyme catalyses hexadecan-1-ol + hexadecanoyl-CoA = hexadecanyl hexadecanoate + CoA. It catalyses the reaction 13-cis-retinol + hexadecanoyl-CoA = 13-cis-retinyl hexadecanoate + CoA. It carries out the reaction 1,3-di-(9Z-octadecenoyl)-glycerol + (9Z)-octadecenoyl-CoA = 1,2,3-tri-(9Z-octadecenoyl)-glycerol + CoA. The catalysed reaction is 2,3-di-(9Z)-octadecenoyl-sn-glycerol + (9Z)-octadecenoyl-CoA = 1,2,3-tri-(9Z-octadecenoyl)-glycerol + CoA. The protein operates within lipid metabolism; glycerolipid metabolism. With respect to regulation, XP620 is a selective DGAT1 inhibitor. Its function is as follows. Catalyzes the terminal and only committed step in triacylglycerol synthesis by using diacylglycerol and fatty acyl CoA as substrates. Highly expressed in epithelial cells of the small intestine and its activity is essential for the absorption of dietary fats. In liver, plays a role in esterifying exogenous fatty acids to glycerol, and is required to synthesize fat for storage. Also present in female mammary glands, where it produces fat in the milk. May be involved in VLDL (very low density lipoprotein) assembly. In contrast to DGAT2 it is not essential for survival. Functions as the major acyl-CoA retinol acyltransferase (ARAT) in the skin, where it acts to maintain retinoid homeostasis and prevent retinoid toxicity leading to skin and hair disorders. Exhibits additional acyltransferase activities, includin acyl CoA:monoacylglycerol acyltransferase (MGAT), wax monoester and wax diester synthases. Also able to use 1-monoalkylglycerol (1-MAkG) as an acyl acceptor for the synthesis of monoalkyl-monoacylglycerol (MAMAG). The sequence is that of Diacylglycerol O-acyltransferase 1 from Homo sapiens (Human).